Here is a 501-residue protein sequence, read N- to C-terminus: Aldehyde dehydrogenase 1A1 (501 aa).

Ser2 bears the N-acetylserine mark. 2 positions are modified to N6-acetyllysine: Lys91 and Lys128. NAD(+) contacts are provided by residues 167–170 (IPWN), 193–196 (KPAE), 226–227 (GP), and 246–247 (GS). At Lys252 the chain carries N6-acetyllysine. The Proton acceptor role is filled by Glu269. 269–271 (ELG) serves as a coordination point for NAD(+). Catalysis depends on Cys303, which acts as the Nucleophile. Positions 336-501 (LTPGATQGPQ…VTVKISQKNS (166 aa)) are mediates interaction with PRMT3. Residue Thr337 is modified to Phosphothreonine. 349 to 353 (EQYDK) serves as a coordination point for NAD(+). An N6-acetyllysine mark is found at Lys353 and Lys367. 400 to 402 (EIF) provides a ligand contact to NAD(+). Lys410 carries the post-translational modification N6-acetyllysine. At Ser413 the chain carries Phosphoserine. N6-acetyllysine is present on residues Lys419 and Lys495.

The protein belongs to the aldehyde dehydrogenase family. In terms of assembly, homotetramer. Interacts with PRMT3; the interaction is direct, inhibits ALDH1A1 aldehyde dehydrogenase activity and is independent of the methyltransferase activity of PRMT3. In terms of processing, the N-terminus is blocked most probably by acetylation.

It is found in the cytoplasm. The protein resides in the cytosol. Its subcellular location is the cell projection. The protein localises to the axon. The enzyme catalyses an aldehyde + NAD(+) + H2O = a carboxylate + NADH + 2 H(+). The catalysed reaction is all-trans-retinal + NAD(+) + H2O = all-trans-retinoate + NADH + 2 H(+). It catalyses the reaction 9-cis-retinal + NAD(+) + H2O = 9-cis-retinoate + NADH + 2 H(+). It carries out the reaction 11-cis-retinal + NAD(+) + H2O = 11-cis-retinoate + NADH + 2 H(+). The enzyme catalyses 13-cis-retinal + NAD(+) + H2O = 13-cis-retinoate + NADH + 2 H(+). The catalysed reaction is 3-deoxyglucosone + NAD(+) + H2O = 2-dehydro-3-deoxy-D-gluconate + NADH + 2 H(+). It catalyses the reaction (E)-4-hydroxynon-2-enal + NAD(+) + H2O = (E)-4-hydroxynon-2-enoate + NADH + 2 H(+). It carries out the reaction malonaldehyde + NAD(+) + H2O = 3-oxopropanoate + NADH + 2 H(+). The enzyme catalyses hexanal + NAD(+) + H2O = hexanoate + NADH + 2 H(+). The catalysed reaction is propanal + NAD(+) + H2O = propanoate + NADH + 2 H(+). It catalyses the reaction acetaldehyde + NAD(+) + H2O = acetate + NADH + 2 H(+). It carries out the reaction benzaldehyde + NAD(+) + H2O = benzoate + NADH + 2 H(+). The enzyme catalyses 4-aminobutanal + NAD(+) + H2O = 4-aminobutanoate + NADH + 2 H(+). Its pathway is cofactor metabolism; retinol metabolism. Functionally, cytosolic dehydrogenase that catalyzes the irreversible oxidation of a wide range of aldehydes to their corresponding carboxylic acid. Functions downstream of retinol dehydrogenases and catalyzes the oxidation of retinaldehyde into retinoic acid, the second step in the oxidation of retinol/vitamin A into retinoic acid. This pathway is crucial to control the levels of retinol and retinoic acid, two important molecules which excess can be teratogenic and cytotoxic. Also oxidizes aldehydes resulting from lipid peroxidation like (E)-4-hydroxynon-2-enal/HNE, malonaldehyde and hexanal that form protein adducts and are highly cytotoxic. By participating for instance to the clearance of (E)-4-hydroxynon-2-enal/HNE in the lens epithelium prevents the formation of HNE-protein adducts and lens opacification. Also functions downstream of fructosamine-3-kinase in the fructosamine degradation pathway by catalyzing the oxidation of 3-deoxyglucosone, the carbohydrate product of fructosamine 3-phosphate decomposition, which is itself a potent glycating agent that may react with lysine and arginine side-chains of proteins. Also has an aminobutyraldehyde dehydrogenase activity and is probably part of an alternative pathway for the biosynthesis of GABA/4-aminobutanoate in midbrain, thereby playing a role in GABAergic synaptic transmission. The polypeptide is Aldehyde dehydrogenase 1A1 (Macaca fascicularis (Crab-eating macaque)).